A 224-amino-acid chain; its full sequence is tRNA (guanine-N(7)-)-methyltransferase (224 aa).

S-adenosyl-L-methionine-binding residues include glutamate 45, glutamate 70, aspartate 97, and aspartate 119. Residue aspartate 119 is part of the active site. Residues lysine 123, aspartate 155, and 199–202 each bind substrate; that span reads TEYE.

It belongs to the class I-like SAM-binding methyltransferase superfamily. TrmB family.

It catalyses the reaction guanosine(46) in tRNA + S-adenosyl-L-methionine = N(7)-methylguanosine(46) in tRNA + S-adenosyl-L-homocysteine. The protein operates within tRNA modification; N(7)-methylguanine-tRNA biosynthesis. Functionally, catalyzes the formation of N(7)-methylguanine at position 46 (m7G46) in tRNA. The polypeptide is tRNA (guanine-N(7)-)-methyltransferase (Ureaplasma parvum serovar 3 (strain ATCC 27815 / 27 / NCTC 11736)).